A 1177-amino-acid chain; its full sequence is Chromosome partition protein Smc (1177 aa).

34 to 41 (ANGSGKSN) contributes to the ATP binding site. Positions 167–506 (SGIAEYDSKK…IAAEAQREVR (340 aa)) form a coiled coil. Residues 521-627 (GIYGTLAELI…VIVNSMEEAR (107 aa)) form the SMC hinge domain. A coiled-coil region spans residues 659–1012 (LAVDTTKLRE…NEIEKEKKNV (354 aa)).

This sequence belongs to the SMC family. In terms of assembly, homodimer.

The protein localises to the cytoplasm. Functionally, required for chromosome condensation and partitioning. Binds single-stranded but not double-stranded DNA. This chain is Chromosome partition protein Smc, found in Pyrococcus furiosus (strain ATCC 43587 / DSM 3638 / JCM 8422 / Vc1).